The primary structure comprises 111 residues: MINTVALFWALFIVCVVNMLRYYSSLRALLVVLRGCDPLLYQYVDGGGFFTSHGQPGKQLRLVRYIYERRYCDHHDGEFIRRCERLRRQFILTSALCGLVVVALIALMLWH.

Transmembrane regions (helical) follow at residues 1–21 and 90–110; these read MINT…NMLR and FILT…LMLW.

It belongs to the universal stress protein B family.

Its subcellular location is the cell inner membrane. The sequence is that of Universal stress protein B from Edwardsiella ictaluri (strain 93-146).